Consider the following 625-residue polypeptide: Basic helix-loop-helix ARNT-like protein 1 (625 aa).

Residues M1 to R60 are disordered. Phosphoserine; by GSK3-beta is present on S17. Low complexity predominate over residues S17–G32. T21 is subject to Phosphothreonine; by GSK3-beta. Positions N36–G41 match the Nuclear localization signal motif. A compositionally biased stretch (basic and acidic residues) spans D51–R60. The bHLH domain maps to N72 to L125. The residue at position 78 (S78) is a Phosphoserine. S90 is subject to Phosphoserine; by CK2. Residues L142 to L152 carry the Nuclear export signal 1 motif. Positions S143–P215 constitute a PAS 1 domain. Residue K252 forms a Glycyl lysine isopeptide (Lys-Gly) (interchain with G-Cter in SUMO2 and SUMO3) linkage. K259 is covalently cross-linked (Glycyl lysine isopeptide (Lys-Gly) (interchain with G-Cter in SUMO); alternate). A Glycyl lysine isopeptide (Lys-Gly) (interchain with G-Cter in SUMO2); alternate cross-link involves residue K259. Residues P325 to R395 enclose the PAS 2 domain. Residues L360–L368 carry the Nuclear export signal 2 motif. Residues T400–N443 enclose the PAC domain. Disordered stretches follow at residues Q454–A491 and G510–N594. Residues R507 to Q587 form an interaction with CIART region. Positions G510–P520 are enriched in low complexity. The residue at position 537 (K537) is an N6-acetyllysine.

In terms of assembly, component of the circadian clock oscillator which includes the CRY1/2 proteins, CLOCK or NPAS2, BMAL1 or BMAL2, CSNK1D and/or CSNK1E, TIMELESS and the PER1/2/3 proteins. Forms a heterodimer with CLOCK. The CLOCK-BMAL1 heterodimer is required for E-box-dependent transactivation, for CLOCK nuclear translocation and degradation, and, for phosphorylation of both CLOCK and BMAL1. Part of a nuclear complex which also includes RACK1 and PRKCA; RACK1 and PRKCA are recruited to the complex in a circadian manner. Interacts with NPAS2. Interacts with EZH2. Interacts with SUMO3. Interacts with SIRT1. Interacts with AHR. Interacts with ID1, ID2 and ID3. Interacts with DDX4. Interacts with OGT. Interacts with EED and SUZ12. Interacts with MTA1. Interacts with CIART. Interacts with HSP90. Interacts with KAT2B and EP300. Interacts with BHLHE40/DEC1 and BHLHE41/DEC2. Interacts with RELB and the interaction is enhanced in the presence of CLOCK. Interacts with PER1, PER2, CRY1 and CRY2 and this interaction requires a translocation to the nucleus. Interaction of the CLOCK-BMAL1 heterodimer with PER or CRY inhibits transcription activation. Interaction of the CLOCK-BMAL1 with CRY1 is independent of DNA but with PER2 is off DNA. The CLOCK-BMAL1 heterodimer interacts with GSK3B. Interacts with KDM5A. Interacts with KMT2A; in a circadian manner. Interacts with UBE3A. Interacts with PRKCG. Interacts with MAGEL2. Interacts with NCOA2. Interacts with THRAP3. The CLOCK-BMAL1 heterodimer interacts with PASD1. Interacts with PASD1. Interacts with USP9X. Interacts with PIWIL2 (via PIWI domain). Interacts with HDAC3. Interacts with HNF4A. In terms of processing, ubiquitinated, leading to its proteasomal degradation. Deubiquitinated by USP9X. O-glycosylated; contains O-GlcNAc. O-glycosylation by OGT prevents protein degradation by inhibiting ubiquitination. It also stabilizes the CLOCK-BMAL1 heterodimer thereby increasing CLOCK-BMAL1-mediated transcription of genes in the negative loop of the circadian clock such as PER1/2/3 and CRY1/2. Post-translationally, acetylated on Lys-537 by CLOCK during the repression phase of the circadian cycle. Acetylation facilitates recruitment of CRY1 protein and initiates the repression phase of the circadian cycle. Acetylated at Lys-537 by KAT5 during the activation phase of the cycle, leading to recruitment of the positive transcription elongation factor b (P-TEFb) and BRD4, followed by productive elongation of circadian transcripts. Deacetylated by SIRT1, which may result in decreased protein stability. In terms of processing, phosphorylated upon dimerization with CLOCK. Phosphorylation enhances the transcriptional activity, alters the subcellular localization and decreases the stability of the CLOCK-BMAL1 heterodimer by promoting its degradation. Phosphorylation shows circadian variations in the liver with a peak between CT10 to CT14. Phosphorylation at Ser-90 by CK2 is essential for its nuclear localization, its interaction with CLOCK and controls CLOCK nuclear entry. Dephosphorylation at Ser-78 is important for dimerization with CLOCK and transcriptional activity. Sumoylated on Lys-259 upon dimerization with CLOCK. Predominantly conjugated to poly-SUMO2/3 rather than SUMO1 and the level of these conjugates undergo rhythmic variation, peaking at CT9-CT12. Sumoylation localizes it exclusively to the PML body and promotes its ubiquitination in the PML body, ubiquitin-dependent proteasomal degradation and the transcriptional activity of the CLOCK-BMAL1 heterodimer. Post-translationally, undergoes lysosome-mediated degradation in a time-dependent manner in the liver.

The protein resides in the nucleus. It is found in the cytoplasm. Its subcellular location is the PML body. Its function is as follows. Transcriptional activator which forms a core component of the circadian clock. The circadian clock, an internal time-keeping system, regulates various physiological processes through the generation of approximately 24 hour circadian rhythms in gene expression, which are translated into rhythms in metabolism and behavior. It is derived from the Latin roots 'circa' (about) and 'diem' (day) and acts as an important regulator of a wide array of physiological functions including metabolism, sleep, body temperature, blood pressure, endocrine, immune, cardiovascular, and renal function. Consists of two major components: the central clock, residing in the suprachiasmatic nucleus (SCN) of the brain, and the peripheral clocks that are present in nearly every tissue and organ system. Both the central and peripheral clocks can be reset by environmental cues, also known as Zeitgebers (German for 'timegivers'). The predominant Zeitgeber for the central clock is light, which is sensed by retina and signals directly to the SCN. The central clock entrains the peripheral clocks through neuronal and hormonal signals, body temperature and feeding-related cues, aligning all clocks with the external light/dark cycle. Circadian rhythms allow an organism to achieve temporal homeostasis with its environment at the molecular level by regulating gene expression to create a peak of protein expression once every 24 hours to control when a particular physiological process is most active with respect to the solar day. Transcription and translation of core clock components (CLOCK, NPAS2, BMAL1, BMAL2, PER1, PER2, PER3, CRY1 and CRY2) plays a critical role in rhythm generation, whereas delays imposed by post-translational modifications (PTMs) are important for determining the period (tau) of the rhythms (tau refers to the period of a rhythm and is the length, in time, of one complete cycle). A diurnal rhythm is synchronized with the day/night cycle, while the ultradian and infradian rhythms have a period shorter and longer than 24 hours, respectively. Disruptions in the circadian rhythms contribute to the pathology of cardiovascular diseases, cancer, metabolic syndromes and aging. A transcription/translation feedback loop (TTFL) forms the core of the molecular circadian clock mechanism. Transcription factors, CLOCK or NPAS2 and BMAL1 or BMAL2, form the positive limb of the feedback loop, act in the form of a heterodimer and activate the transcription of core clock genes and clock-controlled genes (involved in key metabolic processes), harboring E-box elements (5'-CACGTG-3') within their promoters. The core clock genes: PER1/2/3 and CRY1/2 which are transcriptional repressors form the negative limb of the feedback loop and interact with the CLOCK|NPAS2-BMAL1|BMAL2 heterodimer inhibiting its activity and thereby negatively regulating their own expression. This heterodimer also activates nuclear receptors NR1D1/2 and RORA/B/G, which form a second feedback loop and which activate and repress BMAL1 transcription, respectively. BMAL1 positively regulates myogenesis and negatively regulates adipogenesis via the transcriptional control of the genes of the canonical Wnt signaling pathway. Plays a role in normal pancreatic beta-cell function; regulates glucose-stimulated insulin secretion via the regulation of antioxidant genes NFE2L2/NRF2 and its targets SESN2, PRDX3, CCLC and CCLM. Negatively regulates the mTORC1 signaling pathway; regulates the expression of MTOR and DEPTOR. Controls diurnal oscillations of Ly6C inflammatory monocytes; rhythmic recruitment of the PRC2 complex imparts diurnal variation to chemokine expression that is necessary to sustain Ly6C monocyte rhythms. Regulates the expression of HSD3B2, STAR, PTGS2, CYP11A1, CYP19A1 and LHCGR in the ovary and also the genes involved in hair growth. Plays an important role in adult hippocampal neurogenesis by regulating the timely entry of neural stem/progenitor cells (NSPCs) into the cell cycle and the number of cell divisions that take place prior to cell-cycle exit. Regulates the circadian expression of CIART and KLF11. The CLOCK-BMAL1 heterodimer regulates the circadian expression of SERPINE1/PAI1, VWF, B3, CCRN4L/NOC, NAMPT, DBP, MYOD1, PPARGC1A, PPARGC1B, SIRT1, GYS2, F7, NGFR, GNRHR, BHLHE40/DEC1, ATF4, MTA1, KLF10 and also genes implicated in glucose and lipid metabolism. Promotes rhythmic chromatin opening, regulating the DNA accessibility of other transcription factors. The NPAS2-BMAL1 heterodimer positively regulates the expression of MAOA, F7 and LDHA and modulates the circadian rhythm of daytime contrast sensitivity by regulating the rhythmic expression of adenylate cyclase type 1 (ADCY1) in the retina. The preferred binding motif for the CLOCK-BMAL1 heterodimer is 5'-CACGTGA-3', which contains a flanking adenine nucleotide at the 3-prime end of the canonical 6-nucleotide E-box sequence. CLOCK specifically binds to the half-site 5'-CAC-3', while BMAL1 binds to the half-site 5'-GTGA-3'. The CLOCK-BMAL1 heterodimer also recognizes the non-canonical E-box motifs 5'-AACGTGA-3' and 5'-CATGTGA-3'. Essential for the rhythmic interaction of CLOCK with ASS1 and plays a critical role in positively regulating CLOCK-mediated acetylation of ASS1. Plays a role in protecting against lethal sepsis by limiting the expression of immune checkpoint protein CD274 in macrophages in a PKM2-dependent manner. Regulates the diurnal rhythms of skeletal muscle metabolism via transcriptional activation of genes promoting triglyceride synthesis (DGAT2) and metabolic efficiency (COQ10B). In Pongo abelii (Sumatran orangutan), this protein is Basic helix-loop-helix ARNT-like protein 1 (BMAL1).